A 288-amino-acid chain; its full sequence is 2-hydroxy-6-oxononadienedioate/2-hydroxy-6-oxononatrienedioate hydrolase (288 aa).

An AB hydrolase-1 domain is found at 38 to 273 (VVLLHGSGPG…DCGHWAQWEH (236 aa)). H267 serves as the catalytic Proton acceptor.

The protein belongs to the AB hydrolase superfamily. MhpC family. As to quaternary structure, homodimer.

It carries out the reaction (2Z,4E)-2-hydroxy-6-oxonona-2,4-dienedioate + H2O = (2Z)-2-hydroxypenta-2,4-dienoate + succinate + H(+). The catalysed reaction is (2Z,4E,7E)-2-hydroxy-6-oxonona-2,4,7-trienedioate + H2O = (2Z)-2-hydroxypenta-2,4-dienoate + fumarate + H(+). The protein operates within aromatic compound metabolism; 3-phenylpropanoate degradation. Catalyzes the cleavage of the C5-C6 bond of 2-hydroxy-6-oxononadienedioate and 2-hydroxy-6-oxononatrienedioate, a dienol ring fission product of the bacterial meta-cleavage pathway for degradation of phenylpropionic acid. The protein is 2-hydroxy-6-oxononadienedioate/2-hydroxy-6-oxononatrienedioate hydrolase of Escherichia coli O139:H28 (strain E24377A / ETEC).